The sequence spans 245 residues: Probable phosphatase YcdX (245 aa).

Residues histidine 7, histidine 9, histidine 15, histidine 40, glutamate 73, histidine 101, histidine 131, aspartate 192, and histidine 194 each contribute to the Zn(2+) site.

It belongs to the PHP family. In terms of assembly, homotrimer. Requires Zn(2+) as cofactor.

The polypeptide is Probable phosphatase YcdX (Shigella flexneri serotype 5b (strain 8401)).